A 432-amino-acid polypeptide reads, in one-letter code: Trigger factor (432 aa).

The region spanning 161–246 (DDRVTIDFVG…LKKVENMVLP (86 aa)) is the PPIase FKBP-type domain.

This sequence belongs to the FKBP-type PPIase family. Tig subfamily.

It is found in the cytoplasm. The enzyme catalyses [protein]-peptidylproline (omega=180) = [protein]-peptidylproline (omega=0). Functionally, involved in protein export. Acts as a chaperone by maintaining the newly synthesized protein in an open conformation. Functions as a peptidyl-prolyl cis-trans isomerase. The polypeptide is Trigger factor (Haemophilus influenzae (strain PittGG)).